The chain runs to 338 residues: Fructose-1,6-bisphosphatase class 1 1 (338 aa).

Positions 91, 113, 115, and 116 each coordinate Mg(2+). Substrate is bound by residues 116-119, N208, and K274; that span reads DGSS. Mg(2+) is bound at residue E280.

It belongs to the FBPase class 1 family. In terms of assembly, homotetramer. It depends on Mg(2+) as a cofactor.

The protein resides in the cytoplasm. It catalyses the reaction beta-D-fructose 1,6-bisphosphate + H2O = beta-D-fructose 6-phosphate + phosphate. It participates in carbohydrate biosynthesis; gluconeogenesis. In Cupriavidus taiwanensis (strain DSM 17343 / BCRC 17206 / CCUG 44338 / CIP 107171 / LMG 19424 / R1) (Ralstonia taiwanensis (strain LMG 19424)), this protein is Fructose-1,6-bisphosphatase class 1 1.